The chain runs to 136 residues: Nucleoside diphosphate kinase (136 aa).

Residues lysine 10, phenylalanine 58, arginine 86, threonine 92, arginine 104, and asparagine 114 each contribute to the ATP site. The active-site Pros-phosphohistidine intermediate is the histidine 117.

Belongs to the NDK family. Homotetramer. The cofactor is Mg(2+).

It localises to the cytoplasm. It carries out the reaction a 2'-deoxyribonucleoside 5'-diphosphate + ATP = a 2'-deoxyribonucleoside 5'-triphosphate + ADP. The catalysed reaction is a ribonucleoside 5'-diphosphate + ATP = a ribonucleoside 5'-triphosphate + ADP. Major role in the synthesis of nucleoside triphosphates other than ATP. The ATP gamma phosphate is transferred to the NDP beta phosphate via a ping-pong mechanism, using a phosphorylated active-site intermediate. The protein is Nucleoside diphosphate kinase of Mycolicibacterium gilvum (strain PYR-GCK) (Mycobacterium gilvum (strain PYR-GCK)).